The following is an 881-amino-acid chain: Translation initiation factor IF-2 (881 aa).

Disordered regions lie at residues 53–92 (RSHG…SKTT) and 163–292 (AEAE…FERP). A compositionally biased stretch (polar residues) spans 81–92 (EVTVNSGRSKTT). The segment covering 172-186 (EAAAAAKAAEALAAA) has biased composition (low complexity). Basic and acidic residues predominate over residues 219 to 236 (RNDDRNNRSAPRNERGPG). A compositionally biased stretch (low complexity) spans 254–263 (GNSNNSNTRG). The region spanning 380–549 (QRPPVVTIMG…SIQAELLELK (170 aa)) is the tr-type G domain. Residues 389 to 396 (GHVDHGKT) form a G1 region. 389 to 396 (GHVDHGKT) provides a ligand contact to GTP. A G2 region spans residues 414–418 (GITQH). The interval 435 to 438 (DTPG) is G3. GTP-binding positions include 435–439 (DTPGH) and 489–492 (NKID). The segment at 489–492 (NKID) is G4. The tract at residues 525–527 (SAK) is G5.

Belongs to the TRAFAC class translation factor GTPase superfamily. Classic translation factor GTPase family. IF-2 subfamily.

It is found in the cytoplasm. Its function is as follows. One of the essential components for the initiation of protein synthesis. Protects formylmethionyl-tRNA from spontaneous hydrolysis and promotes its binding to the 30S ribosomal subunits. Also involved in the hydrolysis of GTP during the formation of the 70S ribosomal complex. In Stenotrophomonas maltophilia (strain K279a), this protein is Translation initiation factor IF-2.